The following is a 240-amino-acid chain: Probable septum site-determining protein MinC (240 aa).

The protein belongs to the MinC family. In terms of assembly, interacts with MinD and FtsZ.

Cell division inhibitor that blocks the formation of polar Z ring septums. Rapidly oscillates between the poles of the cell to destabilize FtsZ filaments that have formed before they mature into polar Z rings. Prevents FtsZ polymerization. This is Probable septum site-determining protein MinC from Aeromonas hydrophila subsp. hydrophila (strain ATCC 7966 / DSM 30187 / BCRC 13018 / CCUG 14551 / JCM 1027 / KCTC 2358 / NCIMB 9240 / NCTC 8049).